Consider the following 313-residue polypeptide: Ketimine reductase mu-crystallin (313 aa).

Arg-47 contributes to the 3,3',5-triiodo-L-thyronine binding site. Ser-90, His-91, Arg-118, Ala-143, Val-145, Gln-146, Asn-167, Arg-168, Thr-169, Asn-172, Thr-204, Met-205, and Val-225 together coordinate NADPH. Glu-256 is a binding site for 3,3',5-triiodo-L-thyronine. Ser-291 contacts NADPH.

Belongs to the ornithine cyclodeaminase/mu-crystallin family. Homodimer. Binds the thyroid hormone triiodothyronine (T3); T3 binding inhibits enzymatic activity. As to expression, expressed in the spiral ligament of the cochlea (at protein level).

Its subcellular location is the cytoplasm. The catalysed reaction is L-pipecolate + NADP(+) = Delta(1)-piperideine-2-carboxylate + NADPH + H(+). It catalyses the reaction L-pipecolate + NAD(+) = Delta(1)-piperideine-2-carboxylate + NADH + H(+). It carries out the reaction L-proline + NADP(+) = 1-pyrroline-2-carboxylate + NADPH + H(+). The enzyme catalyses L-proline + NAD(+) = 1-pyrroline-2-carboxylate + NADH + H(+). The catalysed reaction is (3R)-1,4-thiomorpholine-3-carboxylate + NAD(+) = 3,4-dehydrothiomorpholine-3-carboxylate + NADH + 2 H(+). It catalyses the reaction (3R)-1,4-thiomorpholine-3-carboxylate + NADP(+) = 3,4-dehydrothiomorpholine-3-carboxylate + NADPH + 2 H(+). It carries out the reaction (S)-cystathionine ketimine + NADH + 2 H(+) = (3R,5S)-2,3,5,6,7-pentahydro-1,4-thiazepine-3,5-dicarboxylate + NAD(+). The enzyme catalyses (S)-cystathionine ketimine + NADPH + 2 H(+) = (3R,5S)-2,3,5,6,7-pentahydro-1,4-thiazepine-3,5-dicarboxylate + NADP(+). The catalysed reaction is (R)-lanthionine ketimine + NADPH + 2 H(+) = (3R,5R)-1,4-thiomorpholine-3,5-dicarboxylate + NADP(+). It catalyses the reaction Delta(2)-thiazoline-2-carboxylate + NADPH + 2 H(+) = L-thiazolidine-2-carboxylate + NADP(+). Catalyzes the NAD(P)H-dependent reduction of imine double bonds of a number of cyclic ketimine substrates, including sulfur-containing cyclic ketimines. Under physiological conditions, it efficiently catalyzes delta(1)-piperideine-2-carboxylate (P2C) and delta(1)-pyrroline-2-carboxylate (Pyr2C) reduction, suggesting a central role in lysine and glutamate metabolism. Additional substrates are delta(2)-thiazoline-2-carboxylate (T2C), 3,4-dehydrothiomorpholine-3-carboxylate (AECK), and (R)-lanthionine ketimine (LK) that is reduced at very low rate compared to other substrates. Also catalyzes the NAD(P)H-dependent reduction of (S)-cystathionine ketimine (CysK). This chain is Ketimine reductase mu-crystallin, found in Mus musculus (Mouse).